The primary structure comprises 584 residues: 65 kDa protein (584 aa).

Residues 459-548 (YDLYIAESAI…TKKVENWLPP (90 aa)) enclose the Toprim domain.

In Zymomonas mobilis subsp. mobilis (strain ATCC 10988 / DSM 424 / LMG 404 / NCIMB 8938 / NRRL B-806 / ZM1), this protein is 65 kDa protein.